The following is an 854-amino-acid chain: A-kinase anchor protein 4 (854 aa).

Residues 1–188 (MMAYSDTTMM…MTAAKNTNNN (188 aa)) constitute a propeptide that is removed on maturation. Phosphoserine occurs at positions 96, 130, 190, 213, 226, and 272. Residues 184–207 (NTNNNQSPSAPPAKPPSTQRAVIS) form a disordered region. A PKA-RI and PKA-RII subunit binding domain region spans residues 219–232 (FYVNRLSSLVIQMA). Residues 287 to 323 (RGTGEESREGGQKSFLYSELSNKSKSGDKQMSQRESK) form a disordered region. Residues 288-297 (GTGEESREGG) are compositionally biased toward basic and acidic residues. A Phosphoserine modification is found at Ser-300. At Tyr-303 the chain carries Phosphotyrosine. Ser-304 and Ser-307 each carry phosphoserine. A compositionally biased stretch (basic and acidic residues) spans 311-323 (KSGDKQMSQRESK). A PKA-RI-alpha subunit binding domain region spans residues 336-345 (YANQVASDMM). Residues Ser-342, Ser-432, Ser-443, Ser-445, Ser-447, Ser-450, Ser-464, and Ser-492 each carry the phosphoserine modification. Thr-506 is subject to Phosphothreonine. Residues Ser-536, Ser-581, Ser-627, and Ser-703 each carry the phosphoserine modification.

This sequence belongs to the AKAP110 family. Interacts with PRKAR1A and PRKAR2A. Interacts with ENO4. Interacts with QRICH2. Post-translationally, phosphorylated by STK33 during sperm flagella assembly. In terms of tissue distribution, testis specific; only expressed in round spermatids.

The protein resides in the cell projection. It is found in the cilium. It localises to the flagellum. Major structural component of sperm fibrous sheath. Plays a role in sperm motility. This Homo sapiens (Human) protein is A-kinase anchor protein 4.